The following is a 168-amino-acid chain: DAZ-associated protein 2 (168 aa).

Over residues 1-13 (MNSKGQYPTQPTY) the composition is skewed to low complexity. A disordered region spans residues 1 to 25 (MNSKGQYPTQPTYPVQPPGNPVYPQ). The short motif at 39 to 42 (PPAY) is the PPAY element. Position 77 is a phosphoserine (S77).

In terms of assembly, interacts with SOX6. Interacts with DAZ1 and DAZL. Interacts with IL17RB. May interact with FAM168B. Interacts with INCA1. Interacts with EIF4G1 and EIF4G2. Interacts (via PPAY motif) with NEDD4 (via WW domains). Interacts with transcription factor TCF4; the interaction results in localization of DAZAP2 to the nucleus. Interacts with transcription factors TCF7 and TCF7L1. Interacts with transcription factor LEF1. Interacts with serine/threonine-protein kinase HIPK2; the interaction results in phosphorylation of DAZAP2 which causes localization of DAZAP2 to the nucleus, reduces interaction of DAZAP2 with HIPK2 and prevents DAZAP2-dependent degradation of HIPK2. Interacts with ubiquitin ligase SIAH1; the interaction is decreased following phosphorylation of DAZAP2 by HIPK2. Interacts with TP53; the interaction is triggered by DNA damage. In terms of processing, ubiquitinated by SMURF2, leading to proteasomal degradation. Ubiquitinated by NEDD4, leading to proteasomal degradation. Post-translationally, following DNA damage, phosphorylated by HIPK2 which promotes DAZAP2 localization to the nucleus, reduces interaction of DAZAP2 with HIPK2 and SIAH1, and prevents DAZAP2-dependent ubiquitination of HIPK2 by E3 ubiquitin-protein ligase SIAH1 and subsequent HIPK2 proteasomal degradation. Widely expressed. Highly expressed in brain.

It localises to the cytoplasm. Its subcellular location is the nucleus. It is found in the nucleus speckle. The protein resides in the nuclear body. The protein localises to the stress granule. Its function is as follows. In unstressed cells, promotes SIAH1-mediated polyubiquitination and degradation of the serine/threonine-protein kinase HIPK2, probably by acting as a loading factor that potentiates complex formation between HIPK2 and ubiquitin ligase SIAH1. In response to DNA damage, localizes to the nucleus following phosphorylation by HIPK2 and modulates the expression of a subset of TP53/p53 target genes by binding to TP53 at target gene promoters. This limits the expression of a number of cell death-mediating TP53 target genes, reducing DNA damage-induced cell death. Enhances the binding of transcription factor TCF7L2/TCF4, a Wnt signaling pathway effector, to the promoters of target genes. Plays a role in stress granule formation. This chain is DAZ-associated protein 2 (Dazap2), found in Mus musculus (Mouse).